Reading from the N-terminus, the 598-residue chain is MRTEYCGLVTEHLLGQTVSLCGWVHRRRDHGGVIFIDLRDREGLVQVVCDPDRAEMFAAAEGVRNEFCIQVKGLVRGRPEGTINAGLKSGRIEVLCHELNVLNASVTPPFQLDDDNLSETTRLTHRVLDLRRPQMQHNLRLRYRVAIEARKYLDEQGFIDIETPMLTKSTPEGARDYLVPSRVNAGQFFALPQSPQLFKQLLMVANFDRYYQITKCFRDEDLRADRQPEFTQIDCETSFLGEQEIRDLFEDMIRHIFKTTIGVELDATFPVMPYSEAMARFGSDKPDLRVKLEFTELTDAMKDVDFKVFSTPANTKDGRVAALRVPKGGELTRGDIDGYTEFVRIYGAKGLAWIKVNERAKGRDGLQSPIVKNLHDASIAAILERTGAQDGDIIFFAADRAKVVNDSLGALRLKIGHSEFGKANGLVEAGWKPLWVVDFPMFEYDDEEARYVAAHHPFTSPKDEHLEYLETDPGRCLAKAYDMVLNGWEIGGGSVRIHREEVQSKVFRALKIGPEEAQAKFGFLLDALQYGAPPHGGIAFGLDRIVTMMAGADSIRDVIAFPKTQRAQCLLTQAPSPVDERQLRELHIRLRQPEQPKA.

E172 is a binding site for L-aspartate. Residues 196 to 199 (QLFK) form an aspartate region. R218 is an L-aspartate binding site. Residues 218–220 (RDE) and Q227 contribute to the ATP site. H455 contacts L-aspartate. E489 provides a ligand contact to ATP. Residue R496 coordinates L-aspartate. 541–544 (GLDR) is an ATP binding site.

It belongs to the class-II aminoacyl-tRNA synthetase family. Type 1 subfamily. Homodimer.

The protein resides in the cytoplasm. The enzyme catalyses tRNA(Asx) + L-aspartate + ATP = L-aspartyl-tRNA(Asx) + AMP + diphosphate. Its function is as follows. Aspartyl-tRNA synthetase with relaxed tRNA specificity since it is able to aspartylate not only its cognate tRNA(Asp) but also tRNA(Asn). Reaction proceeds in two steps: L-aspartate is first activated by ATP to form Asp-AMP and then transferred to the acceptor end of tRNA(Asp/Asn). This is Aspartate--tRNA(Asp/Asn) ligase from Burkholderia mallei (strain ATCC 23344).